The primary structure comprises 125 residues: Small ribosomal subunit protein uS13 (125 aa).

A disordered region spans residues 95–125 (GLPVNGQRTRTNARTRKGGKKTVANKKKVTK). Positions 105–125 (TNARTRKGGKKTVANKKKVTK) are enriched in basic residues.

Belongs to the universal ribosomal protein uS13 family. In terms of assembly, part of the 30S ribosomal subunit. Forms a loose heterodimer with protein S19. Forms two bridges to the 50S subunit in the 70S ribosome.

Its function is as follows. Located at the top of the head of the 30S subunit, it contacts several helices of the 16S rRNA. In the 70S ribosome it contacts the 23S rRNA (bridge B1a) and protein L5 of the 50S subunit (bridge B1b), connecting the 2 subunits; these bridges are implicated in subunit movement. Contacts the tRNAs in the A and P-sites. The chain is Small ribosomal subunit protein uS13 from Leptospira borgpetersenii serovar Hardjo-bovis (strain L550).